A 45-amino-acid polypeptide reads, in one-letter code: Mu-conotoxin-like Cal 12.1.2e (45 aa).

4 disulfide bridges follow: Cys-3–Cys-16, Cys-11–Cys-28, Cys-18–Cys-33, and Cys-27–Cys-39. A 6'-bromotryptophan modification is found at Trp-17. Pro-23 carries the 4-hydroxyproline modification. Trp-38 carries the 6'-bromotryptophan modification. At Pro-40 the chain carries 4-hydroxyproline.

Expressed by the venom duct.

It localises to the secreted. In terms of biological role, mu-conotoxins block voltage-gated sodium channels. This toxin reversibly blocks voltage-gated sodium channel in cephalopods, with no alteration in the voltage dependence of sodium conductance or on the kinetics of inactivation. This chain is Mu-conotoxin-like Cal 12.1.2e, found in Californiconus californicus (California cone).